Consider the following 142-residue polypeptide: Small ribosomal subunit protein uS9 (142 aa).

The segment at 117-142 is disordered; the sequence is KGDPRRTEHKKPGIKHARSKRQKAYR. Residues 123 to 142 show a composition bias toward basic residues; it reads TEHKKPGIKHARSKRQKAYR.

The protein belongs to the universal ribosomal protein uS9 family.

In Pyrobaculum aerophilum (strain ATCC 51768 / DSM 7523 / JCM 9630 / CIP 104966 / NBRC 100827 / IM2), this protein is Small ribosomal subunit protein uS9.